A 748-amino-acid chain; its full sequence is Serine/threonine-protein kinase CG17528 (748 aa).

Composition is skewed to polar residues over residues 22–35 (QASP…SVPS) and 47–59 (EKTN…QEDN). 2 disordered regions span residues 22–41 (QASP…NVVT) and 47–81 (EKTN…ELDD). 6 positions are modified to phosphoserine: S67, S70, S73, S87, S88, and S89. T91 bears the Phosphothreonine mark. Phosphoserine is present on S93. T100 is modified (phosphothreonine). Doublecortin domains follow at residues 158 to 244 (LRIK…VEYN) and 313 to 396 (RIVT…AEDF). Positions 477-735 (YSLGRIIGDG…SEDILDHSWT (259 aa)) constitute a Protein kinase domain. Residues 483–491 (IGDGNFAIV) and K506 contribute to the ATP site. Residue D598 is the Proton acceptor of the active site.

This sequence belongs to the protein kinase superfamily. CAMK Ser/Thr protein kinase family. CaMK subfamily.

It carries out the reaction L-seryl-[protein] + ATP = O-phospho-L-seryl-[protein] + ADP + H(+). The catalysed reaction is L-threonyl-[protein] + ATP = O-phospho-L-threonyl-[protein] + ADP + H(+). This chain is Serine/threonine-protein kinase CG17528, found in Drosophila melanogaster (Fruit fly).